Consider the following 239-residue polypeptide: Ribosomal RNA small subunit methyltransferase G (239 aa).

Residues G77, F82, 128 to 129 (AE), and R147 contribute to the S-adenosyl-L-methionine site.

It belongs to the methyltransferase superfamily. RNA methyltransferase RsmG family.

Its subcellular location is the cytoplasm. Functionally, specifically methylates the N7 position of guanine in position 535 of 16S rRNA. This is Ribosomal RNA small subunit methyltransferase G from Bacillus cereus (strain G9842).